The following is a 341-amino-acid chain: S-adenosylmethionine:tRNA ribosyltransferase-isomerase (341 aa).

The protein belongs to the QueA family. Monomer.

It is found in the cytoplasm. The enzyme catalyses 7-aminomethyl-7-carbaguanosine(34) in tRNA + S-adenosyl-L-methionine = epoxyqueuosine(34) in tRNA + adenine + L-methionine + 2 H(+). It functions in the pathway tRNA modification; tRNA-queuosine biosynthesis. Transfers and isomerizes the ribose moiety from AdoMet to the 7-aminomethyl group of 7-deazaguanine (preQ1-tRNA) to give epoxyqueuosine (oQ-tRNA). This is S-adenosylmethionine:tRNA ribosyltransferase-isomerase from Clostridium beijerinckii (strain ATCC 51743 / NCIMB 8052) (Clostridium acetobutylicum).